Reading from the N-terminus, the 856-residue chain is Increased rDNA silencing protein 4 (856 aa).

Disordered stretches follow at residues 1-204 (MSAS…EPKS), 230-563 (KQEE…PTPE), and 589-672 (TSLE…DEDL). Low complexity-rich tracts occupy residues 12–42 (GPASPTSSSTGASTNPATSGLAAALKGATLA), 67–84 (VPTPGTGSVSTSTSRTVG), and 111–130 (SRVVTSTPSSSSSVGSAGRT). Residues 152 to 162 (HVEERANDHAP) show a composition bias toward basic and acidic residues. A compositionally biased stretch (low complexity) spans 194–204 (ASAKPSSEPKS). The span at 239–254 (KKKKKKKPRPASKTQH) shows a compositional bias: basic residues. 2 stretches are compositionally biased toward polar residues: residues 255–275 (HQTLTSPSPTPSEGLSIENQC) and 303–315 (SLSTVESIKSSTG). Residues 329–347 (GETRNRNGDVRDKPSREGG) are compositionally biased toward basic and acidic residues. 3 stretches are compositionally biased toward polar residues: residues 396-410 (PVSQHAQISETTIIS), 451-468 (RVVSPSVDQSQTIRQSAE), and 478-488 (RNSTSSDETFV). Residues 503–514 (KELERVRPRLDR) show a composition bias toward basic and acidic residues. Residues 517–535 (TSTSSRASRVSTPASVRSP) are compositionally biased toward low complexity. The span at 603-620 (RRGHRHHHLPHPHLRHRT) shows a compositional bias: basic residues. The segment covering 644–654 (PSRQTEHTQPA) has biased composition (polar residues). The region spanning 743–832 (DSLGQVDLSR…EGVWESAMDR (90 aa)) is the EH domain.

This sequence belongs to the IRS4 family.

Functionally, positive regulator of phosphatidylinositol 4,5-bisphosphate turnover and negatively regulates signaling through the cell integrity pathway. Involved in rDNA silencing. This Neurospora crassa (strain ATCC 24698 / 74-OR23-1A / CBS 708.71 / DSM 1257 / FGSC 987) protein is Increased rDNA silencing protein 4 (irs-4).